The following is a 69-amino-acid chain: UPF0270 protein VCM66_2532 (69 aa).

Belongs to the UPF0270 family.

The sequence is that of UPF0270 protein VCM66_2532 from Vibrio cholerae serotype O1 (strain M66-2).